The chain runs to 723 residues: Calpastatin (723 aa).

Disordered stretches follow at residues 1-402 and 422-509; these read MNPT…PGRC and STHS…LPPL. The span at 21-30 shows a compositional bias: basic residues; the sequence is PNKKRHKKQA. Residue Lys-32 forms a Glycyl lysine isopeptide (Lys-Gly) (interchain with G-Cter in SUMO2) linkage. The segment covering 46-84 has biased composition (basic and acidic residues); it reads VVHEKKTQEVKPKEHTEPKSQPKHPSDTRSKHAPKEKAV. An N6-acetyllysine modification is found at Lys-50. Composition is skewed to low complexity over residues 85-94 and 113-125; these read SKSSEQPPSE and SAVP…ASAE. Phosphoserine is present on Ser-87. Thr-137 carries the post-translational modification Phosphothreonine. Residues 157-173 are compositionally biased toward acidic residues; the sequence is TALDDLIDTLGEPEETK. The Inhibitory domain 1 repeat unit spans residues 171–224; sequence ETKEDTTTYTGPEVSDPMSSTYIEELGKREVTLPPKYRELLNKEEGIAGPPPDS. The segment covering 195-216 has biased composition (basic and acidic residues); that stretch reads ELGKREVTLPPKYRELLNKEEG. Ser-224 and Ser-245 each carry phosphoserine. 2 stretches are compositionally biased toward basic and acidic residues: residues 249-263 and 306-367; these read DAKK…EEAL and PRPE…KPLS. One copy of the Inhibitory domain 2 repeat lies at 307–359; that stretch reads RPELDPSSIKEVDEAKAKEEKVKKCGEDEERVPSEYRLKPATDKDGKPLLPEA. Phosphoserine occurs at positions 367, 369, and 376. Over residues 378–396 the composition is skewed to basic and acidic residues; sequence DFDRSKCKEKQSKPTEKNR. Phosphoserine is present on Ser-443. Positions 445 to 504 are enriched in basic and acidic residues; it reads GKKEADPEDGKPVEDKVKEKAKEEDREKLGEREETIPPDYRLEEAKDKDGKPLPPKEVKE. The stretch at 449–502 is one Inhibitory domain 3 repeat; sequence ADPEDGKPVEDKVKEKAKEEDREKLGEREETIPPDYRLEEAKDKDGKPLPPKEV. Ser-519 and Ser-530 each carry phosphoserine. The interval 547 to 723 is disordered; it reads SQTPAPTTQA…KPKADGKSTS (177 aa). Over residues 548–560 the composition is skewed to low complexity; it reads QTPAPTTQAAGPP. A compositionally biased stretch (basic and acidic residues) spans 562 to 571; sequence DSARDNKELD. Residues Ser-578 and Ser-580 each carry the phosphoserine modification. One copy of the Inhibitory domain 4 repeat lies at 586–642; it reads PDPDEHKPVEDKVKEKAKAEHRDKLGERDDTIPPKYQHLLDDNKEGTPGKPKRSESP. Basic and acidic residues predominate over residues 586–643; it reads PDPDEHKPVEDKVKEKAKAEHRDKLGERDDTIPPKYQHLLDDNKEGTPGKPKRSESPR. Residues 653–670 are compositionally biased toward polar residues; the sequence is NLQVPRTPLTPSQGTWTA. A compositionally biased stretch (low complexity) spans 672–690; that stretch reads PQLQKPQQTQQRTKTRSLL. The segment covering 701–723 has biased composition (basic and acidic residues); that stretch reads KAKDSTKAKEETSKPKADGKSTS.

The protein belongs to the protease inhibitor I27 (calpastatin) family.

Functionally, specific inhibition of calpain (calcium-dependent cysteine protease). Plays a key role in postmortem tenderization of meat and have been proposed to be involved in muscle protein degradation in living tissue. The polypeptide is Calpastatin (CAST) (Ovis aries (Sheep)).